Reading from the N-terminus, the 71-residue chain is Conotoxin De13.1 (71 aa).

The signal sequence occupies residues 1-19 (MSGMGVLLLVLLLVMPLAA). The propeptide occupies 20–35 (FHQDGEGEATRRSGGL). Residues Pro-40 and Pro-44 each carry the 4-hydroxyproline modification. Trp-51 bears the 6'-bromotryptophan mark. Glu-52 is subject to 4-carboxyglutamate. Residue Lys-55 is modified to 5-hydroxylysine. A 4-hydroxyproline modification is found at Pro-58. At His-69 the chain carries Histidine amide.

It belongs to the conotoxin G superfamily. In terms of processing, contains 4 disulfide bonds. In terms of tissue distribution, expressed by the venom duct.

It localises to the secreted. The polypeptide is Conotoxin De13.1 (Conasprella delessertii (Sozon's cone)).